Reading from the N-terminus, the 212-residue chain is Thymidylate kinase (212 aa).

11-18 (GPDGAGKT) is an ATP binding site.

Belongs to the thymidylate kinase family.

The catalysed reaction is dTMP + ATP = dTDP + ADP. In terms of biological role, phosphorylation of dTMP to form dTDP in both de novo and salvage pathways of dTTP synthesis. This Streptococcus mutans serotype c (strain ATCC 700610 / UA159) protein is Thymidylate kinase.